Here is a 379-residue protein sequence, read N- to C-terminus: MASEAHAVVDAHSPPKTTTVWVTGGAGFIGSWLVMRLLERGYNVHATVRDPENQKKVKHLLELPKADTNLTLWKADLAVEGSFDEAIQGCQGVFHVATPMDFESKDPENEVIKPTVRGMLSIIESCAKANTVKRLVFTSSAGTLDVQEDQKLFYDETSWSDLDFIYAKKMTGWMYFVSKILAEKAAMEEARKNNIDFISIIPPLVVGPFITSTFPPSLITALSLITAHYGIIKQGQYVHLDDLCEAHIFLYEHPKAEGRFICSSHHAIIYDVAKMVRQKWPEYYVPTEFKGIDKDLALVSFSSKKLMDIKFQFKHTLEDMYKGAIETCRQKQLLPFSTRSTADNGKDKEAIPISTENYSSGKENAPVANCTGKFTNGEI.

Residues Lys56 and Tyr175 each contribute to the NADP(+) site.

Belongs to the NAD(P)-dependent epimerase/dehydratase family. Dihydroflavonol-4-reductase subfamily. In terms of tissue distribution, expressed in both leaf and hypocotyl tissues.

The catalysed reaction is a (2R,3S,4S)-leucoanthocyanidin + NADP(+) = a (2R,3R)-dihydroflavonol + NADPH + H(+). It catalyses the reaction (2S)-flavan-4-ol + NADP(+) = (2S)-flavanone + NADPH + H(+). Its pathway is pigment biosynthesis; anthocyanin biosynthesis. In terms of biological role, bifunctional enzyme involved in flavonoid metabolism. This chain is Dihydroflavonol 4-reductase, found in Solanum lycopersicum (Tomato).